The following is a 130-amino-acid chain: Large ribosomal subunit protein bL19 (130 aa).

The protein belongs to the bacterial ribosomal protein bL19 family.

Its function is as follows. This protein is located at the 30S-50S ribosomal subunit interface and may play a role in the structure and function of the aminoacyl-tRNA binding site. The polypeptide is Large ribosomal subunit protein bL19 (Burkholderia lata (strain ATCC 17760 / DSM 23089 / LMG 22485 / NCIMB 9086 / R18194 / 383)).